Here is a 289-residue protein sequence, read N- to C-terminus: Nucleotide-binding protein Franean1_2060 (289 aa).

13–20 contacts ATP; the sequence is GLSGAGRS. 64–67 lines the GTP pocket; sequence DVRG.

It belongs to the RapZ-like family.

Displays ATPase and GTPase activities. This Parafrankia sp. (strain EAN1pec) protein is Nucleotide-binding protein Franean1_2060.